A 275-amino-acid chain; its full sequence is NAD(P)H dehydrogenase [quinone] 1 (275 aa).

FAD-binding positions include H13, 19–20 (FN), and Q68. S83 bears the Phosphoserine mark. 105-108 (LQWF) is a binding site for FAD. Residue 127–129 (AYT) coordinates substrate. Residues 149–152 (TTGG), Y157, and R202 each bind FAD. An important for apoenzyme conformational stability region spans residues 226 to 275 (PSSLFDLNFQAGFLLKKEIEDEQKNNKYGLSVGHHLGKPIPTDNQIKARK). A Glycyl lysine isopeptide (Lys-Gly) (interchain with G-Cter in SUMO2) cross-link involves residue K252.

It belongs to the NAD(P)H dehydrogenase (quinone) family. As to quaternary structure, homodimer. Interacts with PDLIM4 isoform 2; this interaction stabilizes PDLIM4 isoform 2 in response to oxidative stress and protects it from ubiquitin-independent degradation by the core 20S proteasome. Interacts with TP73 (via SAM domain); this interaction is NADH-dependent, stabilizes TP73 in response to oxidative stress and protects it from ubiquitin-independent degradation by the 20S proteasome. Interacts with TP53; this interaction is NADH-dependent, stabilizes TP53 in response to oxidative stress and protects it from ubiquitin-independent degradation by the 20S proteasome. FAD serves as cofactor.

The protein localises to the cytoplasm. The protein resides in the cytosol. It catalyses the reaction a quinone + NADH + H(+) = a quinol + NAD(+). The enzyme catalyses a quinone + NADPH + H(+) = a quinol + NADP(+). It carries out the reaction ubiquinone-10 + NADH + H(+) = ubiquinol-10 + NAD(+). The catalysed reaction is menadione + NADH + H(+) = menadiol + NAD(+). Flavin-containing quinone reductase that catalyzes two-electron reduction of quinones to hydroquinones using either NADH or NADPH as electron donors. In a ping-pong kinetic mechanism, the electrons are sequentially transferred from NAD(P)H to flavin cofactor and then from reduced flavin to the quinone, bypassing the formation of semiquinone and reactive oxygen species. Regulates cellular redox state primarily through quinone detoxification. Reduces components of plasma membrane redox system such as coenzyme Q and vitamin quinones, producing antioxidant hydroquinone forms. In the process may function as superoxide scavenger to prevent hydroquinone oxidation and facilitate excretion. Alternatively, can activate quinones and their derivatives by generating redox reactive hydroquinones with DNA cross-linking antitumor potential. Acts as a gatekeeper of the core 20S proteasome known to degrade proteins with unstructured regions. Upon oxidative stress, interacts with tumor suppressors TP53 and TP73 in a NADH-dependent way and inhibits their ubiquitin-independent degradation by the 20S proteasome. This Cavia porcellus (Guinea pig) protein is NAD(P)H dehydrogenase [quinone] 1 (NQO1).